Consider the following 151-residue polypeptide: 3-hydroxyacyl-[acyl-carrier-protein] dehydratase FabZ (151 aa).

His54 is a catalytic residue.

This sequence belongs to the thioester dehydratase family. FabZ subfamily. Oligomer. Post-translationally, the N-terminus is blocked.

Its subcellular location is the cytoplasm. The enzyme catalyses a (3R)-hydroxyacyl-[ACP] = a (2E)-enoyl-[ACP] + H2O. Its function is as follows. Involved in unsaturated fatty acids biosynthesis. Catalyzes the dehydration of short chain beta-hydroxyacyl-ACPs and long chain saturated and unsaturated beta-hydroxyacyl-ACPs. This chain is 3-hydroxyacyl-[acyl-carrier-protein] dehydratase FabZ, found in Escherichia coli O9:H4 (strain HS).